Consider the following 206-residue polypeptide: Large ribosomal subunit protein uL22m (206 aa).

The N-terminal 40 residues, 1-40 (MAAALLRELGALWVPNLRIWTTQMLRVLPQSCIHTSTSLD), are a transit peptide targeting the mitochondrion.

It belongs to the universal ribosomal protein uL22 family. As to quaternary structure, component of the mitochondrial ribosome large subunit (39S) which comprises a 16S rRNA and about 50 distinct proteins.

Its subcellular location is the mitochondrion. This Rattus norvegicus (Rat) protein is Large ribosomal subunit protein uL22m (Mrpl22).